We begin with the raw amino-acid sequence, 141 residues long: Nucleoside diphosphate kinase (141 aa).

The ATP site is built by lysine 9, phenylalanine 57, arginine 85, threonine 91, arginine 102, and asparagine 112. The Pros-phosphohistidine intermediate role is filled by histidine 115.

Belongs to the NDK family. Homotetramer. Mg(2+) serves as cofactor.

The protein localises to the cytoplasm. The catalysed reaction is a 2'-deoxyribonucleoside 5'-diphosphate + ATP = a 2'-deoxyribonucleoside 5'-triphosphate + ADP. It catalyses the reaction a ribonucleoside 5'-diphosphate + ATP = a ribonucleoside 5'-triphosphate + ADP. Major role in the synthesis of nucleoside triphosphates other than ATP. The ATP gamma phosphate is transferred to the NDP beta phosphate via a ping-pong mechanism, using a phosphorylated active-site intermediate. This Chlamydia caviae (strain ATCC VR-813 / DSM 19441 / 03DC25 / GPIC) (Chlamydophila caviae) protein is Nucleoside diphosphate kinase.